The sequence spans 428 residues: Dihydroorotase (428 aa).

Positions 60 and 62 each coordinate Zn(2+). Substrate contacts are provided by residues 62 to 64 (HLR) and N94. Zn(2+) contacts are provided by D152, H179, and H232. A substrate-binding site is contributed by N278. A Zn(2+)-binding site is contributed by D305. Residue D305 is part of the active site. Residue H309 coordinates substrate.

It belongs to the metallo-dependent hydrolases superfamily. DHOase family. Class I DHOase subfamily. Zn(2+) is required as a cofactor.

It catalyses the reaction (S)-dihydroorotate + H2O = N-carbamoyl-L-aspartate + H(+). Its pathway is pyrimidine metabolism; UMP biosynthesis via de novo pathway; (S)-dihydroorotate from bicarbonate: step 3/3. Functionally, catalyzes the reversible cyclization of carbamoyl aspartate to dihydroorotate. This is Dihydroorotase from Ruminiclostridium cellulolyticum (strain ATCC 35319 / DSM 5812 / JCM 6584 / H10) (Clostridium cellulolyticum).